The primary structure comprises 232 residues: Cytidylate kinase (232 aa).

Residue 15–23 participates in ATP binding; that stretch reads GPAGAGKST. The tract at residues 164-192 is disordered; it reads KEDPPPISQGQLAAEMKERDMRDSTRADA. The segment covering 178–189 has biased composition (basic and acidic residues); that stretch reads EMKERDMRDSTR.

Belongs to the cytidylate kinase family. Type 1 subfamily.

The protein resides in the cytoplasm. The enzyme catalyses CMP + ATP = CDP + ADP. The catalysed reaction is dCMP + ATP = dCDP + ADP. This is Cytidylate kinase from Solibacter usitatus (strain Ellin6076).